Reading from the N-terminus, the 167-residue chain is Zymogen granule membrane protein 16 (167 aa).

Positions methionine 1 to glycine 16 are cleaved as a signal peptide. The 136-residue stretch at serine 24–valine 159 folds into the Jacalin-type lectin domain.

Belongs to the jacalin lectin family. Highly expressed in liver. Detected at lower levels in colon, ileum and jejunum.

The protein resides in the secreted. It is found in the extracellular space. It localises to the extracellular matrix. Its subcellular location is the zymogen granule lumen. The protein localises to the golgi apparatus lumen. Functionally, may play a role in protein trafficking. May act as a linker molecule between the submembranous matrix on the luminal side of zymogen granule membrane (ZGM) and aggregated secretory proteins during granule formation in the TGN. This Homo sapiens (Human) protein is Zymogen granule membrane protein 16 (ZG16).